A 171-amino-acid chain; its full sequence is Small ribosomal subunit protein uS5 (171 aa).

An S5 DRBM domain is found at 15 to 78 (LKDRLVAINR…EAAKKNLTRV (64 aa)).

Belongs to the universal ribosomal protein uS5 family. In terms of assembly, part of the 30S ribosomal subunit. Contacts proteins S4 and S8.

In terms of biological role, with S4 and S12 plays an important role in translational accuracy. Functionally, located at the back of the 30S subunit body where it stabilizes the conformation of the head with respect to the body. The sequence is that of Small ribosomal subunit protein uS5 from Phocaeicola vulgatus (strain ATCC 8482 / DSM 1447 / JCM 5826 / CCUG 4940 / NBRC 14291 / NCTC 11154) (Bacteroides vulgatus).